The primary structure comprises 278 residues: Large ribosomal subunit protein uL2 (278 aa).

Disordered stretches follow at residues 32–54 (SLCR…TRHI) and 221–278 (RGMT…RNAK). Residues 232 to 245 (NGGGEGKSKSGGGR) show a composition bias toward gly residues.

Belongs to the universal ribosomal protein uL2 family. Part of the 50S ribosomal subunit. Forms a bridge to the 30S subunit in the 70S ribosome.

In terms of biological role, one of the primary rRNA binding proteins. Required for association of the 30S and 50S subunits to form the 70S ribosome, for tRNA binding and peptide bond formation. It has been suggested to have peptidyltransferase activity; this is somewhat controversial. Makes several contacts with the 16S rRNA in the 70S ribosome. The chain is Large ribosomal subunit protein uL2 from Akkermansia muciniphila (strain ATCC BAA-835 / DSM 22959 / JCM 33894 / BCRC 81048 / CCUG 64013 / CIP 107961 / Muc).